We begin with the raw amino-acid sequence, 351 residues long: Histidinol-phosphate aminotransferase (351 aa).

An N6-(pyridoxal phosphate)lysine modification is found at lysine 213.

Belongs to the class-II pyridoxal-phosphate-dependent aminotransferase family. Histidinol-phosphate aminotransferase subfamily. As to quaternary structure, homodimer. It depends on pyridoxal 5'-phosphate as a cofactor.

It carries out the reaction L-histidinol phosphate + 2-oxoglutarate = 3-(imidazol-4-yl)-2-oxopropyl phosphate + L-glutamate. It functions in the pathway amino-acid biosynthesis; L-histidine biosynthesis; L-histidine from 5-phospho-alpha-D-ribose 1-diphosphate: step 7/9. The polypeptide is Histidinol-phosphate aminotransferase (Thermoanaerobacter sp. (strain X514)).